The primary structure comprises 121 residues: Small ribosomal subunit protein bS6 (121 aa).

Residues 96–121 (DTGPSSMMKTVEREDARKTQQAEYQA) form a disordered region. Residues 105 to 115 (TVEREDARKTQ) are compositionally biased toward basic and acidic residues.

Belongs to the bacterial ribosomal protein bS6 family.

In terms of biological role, binds together with bS18 to 16S ribosomal RNA. The protein is Small ribosomal subunit protein bS6 of Albidiferax ferrireducens (strain ATCC BAA-621 / DSM 15236 / T118) (Rhodoferax ferrireducens).